Here is an 80-residue protein sequence, read N- to C-terminus: Putative ATP-dependent Clp protease proteolytic subunit (80 aa).

Residue His19 is part of the active site.

It belongs to the peptidase S14 family. In terms of assembly, component of the chloroplastic Clp protease core complex.

It is found in the plastid. Its subcellular location is the chloroplast. The catalysed reaction is Hydrolysis of proteins to small peptides in the presence of ATP and magnesium. alpha-casein is the usual test substrate. In the absence of ATP, only oligopeptides shorter than five residues are hydrolyzed (such as succinyl-Leu-Tyr-|-NHMec, and Leu-Tyr-Leu-|-Tyr-Trp, in which cleavage of the -Tyr-|-Leu- and -Tyr-|-Trp bonds also occurs).. In terms of biological role, cleaves peptides in various proteins in a process that requires ATP hydrolysis. Has a chymotrypsin-like activity. Plays a major role in the degradation of misfolded proteins. In Pinus strobus (Eastern white pine), this protein is Putative ATP-dependent Clp protease proteolytic subunit.